The primary structure comprises 365 residues: GTPase Obg (365 aa).

Residues 1-159 (MKFIDEARIE…RMLKLELKVL (159 aa)) form the Obg domain. The 175-residue stretch at 160-334 (ADVGLLGMPN…LVYAIKDHLA (175 aa)) folds into the OBG-type G domain. GTP contacts are provided by residues 166 to 173 (GMPNAGKS), 191 to 195 (FTTLH), 213 to 216 (DIPG), 284 to 287 (NKLD), and 315 to 317 (SAL). Mg(2+) contacts are provided by serine 173 and threonine 193.

This sequence belongs to the TRAFAC class OBG-HflX-like GTPase superfamily. OBG GTPase family. As to quaternary structure, monomer. It depends on Mg(2+) as a cofactor.

Its subcellular location is the cytoplasm. Functionally, an essential GTPase which binds GTP, GDP and possibly (p)ppGpp with moderate affinity, with high nucleotide exchange rates and a fairly low GTP hydrolysis rate. Plays a role in control of the cell cycle, stress response, ribosome biogenesis and in those bacteria that undergo differentiation, in morphogenesis control. The sequence is that of GTPase Obg from Cupriavidus metallidurans (strain ATCC 43123 / DSM 2839 / NBRC 102507 / CH34) (Ralstonia metallidurans).